A 210-amino-acid polypeptide reads, in one-letter code: Protein GrpE (210 aa).

The span at 1–12 (MSDQAKDERAPS) shows a compositional bias: basic and acidic residues. Disordered stretches follow at residues 1–26 (MSDQ…RTEG) and 191–210 (IAAE…EKDA).

The protein belongs to the GrpE family. Homodimer.

The protein resides in the cytoplasm. Its function is as follows. Participates actively in the response to hyperosmotic and heat shock by preventing the aggregation of stress-denatured proteins, in association with DnaK and GrpE. It is the nucleotide exchange factor for DnaK and may function as a thermosensor. Unfolded proteins bind initially to DnaJ; upon interaction with the DnaJ-bound protein, DnaK hydrolyzes its bound ATP, resulting in the formation of a stable complex. GrpE releases ADP from DnaK; ATP binding to DnaK triggers the release of the substrate protein, thus completing the reaction cycle. Several rounds of ATP-dependent interactions between DnaJ, DnaK and GrpE are required for fully efficient folding. The protein is Protein GrpE of Mesorhizobium japonicum (strain LMG 29417 / CECT 9101 / MAFF 303099) (Mesorhizobium loti (strain MAFF 303099)).